Consider the following 319-residue polypeptide: UDP-3-O-acylglucosamine N-acyltransferase (319 aa).

H230 (proton acceptor) is an active-site residue.

It belongs to the transferase hexapeptide repeat family. LpxD subfamily. Homotrimer.

The enzyme catalyses a UDP-3-O-[(3R)-3-hydroxyacyl]-alpha-D-glucosamine + a (3R)-hydroxyacyl-[ACP] = a UDP-2-N,3-O-bis[(3R)-3-hydroxyacyl]-alpha-D-glucosamine + holo-[ACP] + H(+). It participates in bacterial outer membrane biogenesis; LPS lipid A biosynthesis. Catalyzes the N-acylation of UDP-3-O-acylglucosamine using 3-hydroxyacyl-ACP as the acyl donor. Is involved in the biosynthesis of lipid A, a phosphorylated glycolipid that anchors the lipopolysaccharide to the outer membrane of the cell. In Campylobacter lari (strain RM2100 / D67 / ATCC BAA-1060), this protein is UDP-3-O-acylglucosamine N-acyltransferase.